A 447-amino-acid chain; its full sequence is Trigger factor (447 aa).

The PPIase FKBP-type domain maps to 159–244 (GDMLLMQVES…VREIKEEKLP (86 aa)).

The protein belongs to the FKBP-type PPIase family. Tig subfamily.

It localises to the cytoplasm. It carries out the reaction [protein]-peptidylproline (omega=180) = [protein]-peptidylproline (omega=0). Involved in protein export. Acts as a chaperone by maintaining the newly synthesized protein in an open conformation. Functions as a peptidyl-prolyl cis-trans isomerase. This Dehalococcoides mccartyi (strain CBDB1) protein is Trigger factor.